The chain runs to 330 residues: Tryptophan--tRNA ligase (330 aa).

ATP-binding positions include 9–11 and 17–18; these read QPT and GN. The short motif at 10–18 is the 'HIGH' region element; that stretch reads PTGDPHIGN. Asp136 is a binding site for L-tryptophan. Residues 148-150, Ile187, and 195-199 contribute to the ATP site; these read GED and KMSKS. A 'KMSKS' region motif is present at residues 195–199; the sequence is KMSKS.

Belongs to the class-I aminoacyl-tRNA synthetase family. In terms of assembly, homodimer.

It localises to the cytoplasm. The enzyme catalyses tRNA(Trp) + L-tryptophan + ATP = L-tryptophyl-tRNA(Trp) + AMP + diphosphate + H(+). In terms of biological role, catalyzes the attachment of tryptophan to tRNA(Trp). This Deinococcus radiodurans (strain ATCC 13939 / DSM 20539 / JCM 16871 / CCUG 27074 / LMG 4051 / NBRC 15346 / NCIMB 9279 / VKM B-1422 / R1) protein is Tryptophan--tRNA ligase.